A 216-amino-acid chain; its full sequence is Gas vesicle protein H (216 aa).

Positions 1 to 141 are disordered; that stretch reads MSPNLNGPGG…IHIETRETDD (141 aa). The span at 15–25 shows a compositional bias: acidic residues; it reads DRPDEPDDSDR. 3 stretches are compositionally biased toward basic and acidic residues: residues 38 to 51, 73 to 84, and 107 to 141; these read PDDR…RPSD, DGHRQGHGRIDR, and KPSD…ETDD.

Belongs to the gas vesicle GvpH family. In terms of assembly, gvpF to GvpM interact with each other in vitro, and may form multi-subunit complex(es). Interacts with GvpC. Might interact with GvpA.

The protein resides in the gas vesicle. In terms of biological role, proteins GvpF to GvpM might be involved in nucleating gas vesicle formation. A minor component of the gas vesicle. Gas vesicles are hollow, gas filled proteinaceous nanostructures found in some microorganisms. They allow positioning of halobacteria at the optimal depth for growth in the poorly aerated, shallow brine pools of their habitat. Its function is as follows. Expression of a 9.5 kb mc-vac DNA fragment containing 2 divergently transcribed regions (gvpD-gvpE-gvpF-gvpG-gvpH-gvpI-gvpJ-gvpK-gvpL-gvpM and gvpA-gvpC-gvpN-gvpO) allows H.volcanii to produce gas vesicles. The protein is Gas vesicle protein H of Haloferax mediterranei (strain ATCC 33500 / DSM 1411 / JCM 8866 / NBRC 14739 / NCIMB 2177 / R-4) (Halobacterium mediterranei).